A 229-amino-acid polypeptide reads, in one-letter code: MELLLLSNSTLPGKAWLEHALPLIANQLNGRRSAVFIPFAGVTQTWDEYTDKTAEVLAPLGVNVTGIHRVADPLAAIEKAEIIIVGGGNTFQLLKESRERGLLAPMADRVKRGALYIGWSAGANLACPTIRTTNDMPIVDPNGFDALDLFPLQINPHFTNALPEGHKGETREQRIRELLVVAPELTVIGLPEGNWIQVSNGQAVLGGPNTTWVFKAGEEAVALEAGHRF.

Residues serine 120, aspartate 135, and histidine 157 each act as charge relay system in the active site.

This sequence belongs to the peptidase S51 family.

The protein resides in the cytoplasm. The enzyme catalyses Dipeptidase E catalyzes the hydrolysis of dipeptides Asp-|-Xaa. It does not act on peptides with N-terminal Glu, Asn or Gln, nor does it cleave isoaspartyl peptides.. In terms of biological role, hydrolyzes dipeptides containing N-terminal aspartate residues. May play a role in allowing the cell to use peptide aspartate to spare carbon otherwise required for the synthesis of the aspartate family of amino acids. This chain is Peptidase E (pepE), found in Salmonella typhimurium (strain LT2 / SGSC1412 / ATCC 700720).